Here is a 960-residue protein sequence, read N- to C-terminus: Vacuolar membrane protease (960 aa).

The Cytoplasmic segment spans residues 1–57 (MADNNSSSGSLVIDEQDYDVHEAGQQGQQGQQKHQQRQQERPSLITRVFRSVFGYRK). The tract at residues 22–41 (EAGQQGQQGQQKHQQRQQER) is disordered. A compositionally biased stretch (low complexity) spans 24-33 (GQQGQQGQQK). A helical transmembrane segment spans residues 58-78 (TSLSLFVVATIALCVSLSYID). The Vacuolar segment spans residues 79-401 (NSVDFISFPT…FTISTSQLFK (323 aa)). A glycan (N-linked (GlcNAc...) asparagine) is linked at N148. H189 and D201 together coordinate Zn(2+). E235 serves as the catalytic Proton acceptor. Zn(2+)-binding residues include E236, E261, and H333. Residues 402-422 (INVALLTVFPILNGLLLLYTI) form a helical membrane-spanning segment. At 423-432 (RSRKWQVSFS) the chain is on the cytoplasmic side. A helical transmembrane segment spans residues 433–453 (SAISIPVALLVTMFIVVYLVV). Over 454–476 (ESYKSFNQYLPSSRPLLLVATIT) the chain is Vacuolar. Residues 477–497 (SILLLVFSIILVAFSFFSIIA) form a helical membrane-spanning segment. At 498–502 (EENLR) the chain is on the cytoplasmic side. The chain crosses the membrane as a helical span at residues 503 to 523 (LLAIVELSFAYWVGLAFTTHG). The Vacuolar segment spans residues 524 to 535 (LSGAESARHSGE). A helical membrane pass occupies residues 536–556 (FAVSILFTLEAVASFLGLIGW). At 557–635 (SLCRNRSHLQ…FGYDWSLQYL (79 aa)) the chain is on the cytoplasmic side. Residues 587-605 (NDHDHEHRHGHEDNEHGEA) show a composition bias toward basic and acidic residues. The tract at residues 587–614 (NDHDHEHRHGHEDNEHGEAHVQQQSQSR) is disordered. Residues 636–656 (ITVPLSIFIIYNSGWLVLEGV) traverse the membrane as a helical segment. N-linked (GlcNAc...) asparagine glycosylation is present at N657. Residues 657–668 (NKTLQESAKAET) lie on the Vacuolar side of the membrane. Residues 669-689 (FVYNLLWIVSVSLVLPLIPFA) traverse the membrane as a helical segment. Over 690-696 (GKLNRYM) the chain is Cytoplasmic. A helical transmembrane segment spans residues 697–717 (VFVLIAIGVLGTLLVHVVQPF). At 718 to 960 (NEANPLKLRF…LVAYTKQVHV (243 aa)) the chain is on the vacuolar side. N-linked (GlcNAc...) asparagine glycosylation is found at N736, N763, N803, N875, and N921.

Belongs to the peptidase M28 family. Zn(2+) serves as cofactor.

The protein localises to the vacuole membrane. In terms of biological role, may be involved in vacuolar sorting and osmoregulation. This is Vacuolar membrane protease from Lodderomyces elongisporus (strain ATCC 11503 / CBS 2605 / JCM 1781 / NBRC 1676 / NRRL YB-4239) (Yeast).